Here is a 428-residue protein sequence, read N- to C-terminus: 3-phosphoshikimate 1-carboxyvinyltransferase (428 aa).

Residues Lys22, Ser23, and Arg27 each contribute to the 3-phosphoshikimate site. Lys22 is a binding site for phosphoenolpyruvate. Residues Gly96 and Arg124 each coordinate phosphoenolpyruvate. 7 residues coordinate 3-phosphoshikimate: Ser170, Ser171, Gln172, Ser198, Asp314, Asn337, and Lys341. Position 172 (Gln172) interacts with phosphoenolpyruvate. Asp314 functions as the Proton acceptor in the catalytic mechanism. Arg345, Arg387, and Lys412 together coordinate phosphoenolpyruvate.

This sequence belongs to the EPSP synthase family. Monomer.

The protein resides in the cytoplasm. The enzyme catalyses 3-phosphoshikimate + phosphoenolpyruvate = 5-O-(1-carboxyvinyl)-3-phosphoshikimate + phosphate. It participates in metabolic intermediate biosynthesis; chorismate biosynthesis; chorismate from D-erythrose 4-phosphate and phosphoenolpyruvate: step 6/7. In terms of biological role, catalyzes the transfer of the enolpyruvyl moiety of phosphoenolpyruvate (PEP) to the 5-hydroxyl of shikimate-3-phosphate (S3P) to produce enolpyruvyl shikimate-3-phosphate and inorganic phosphate. In Shewanella denitrificans (strain OS217 / ATCC BAA-1090 / DSM 15013), this protein is 3-phosphoshikimate 1-carboxyvinyltransferase.